A 2227-amino-acid polypeptide reads, in one-letter code: Genome polyprotein (2227 aa).

Short sequence motifs ((L)YPX(n)L motif) lie at residues 167–171 (YPHGL) and 200–205 (YPVWEL). Residues 766-836 (MMSRIAAGDL…PRKKKGLFSQ (71 aa)) form an involved in P1-2A pentamerization region. A helical membrane pass occupies residues 1010–1030 (VTVEIINTVLCFVKSGILLYV). Residues 1043 to 1070 (IGLLRVMNYVDIGCSVISCGKVFSKMLE) form a membrane-penetrating ability region. Residues 1127–1152 (KKKDILNILKDNQQKIEKAIEEADKF) adopt a coiled-coil conformation. An SF3 helicase domain is found at 1204 to 1366 (HQKLKNLGSI…SFSKNPHNDM (163 aa)). 1230–1237 (GKRGGGKS) provides a ligand contact to ATP. A helical transmembrane segment spans residues 1462-1482 (WVAVGAAVGILGVLVGGWFVY). The residue at position 1499 (Y1499) is an O-(5'-phospho-RNA)-tyrosine. One can recognise a Peptidase C3 domain in the interval 1514 to 1728 (DPVESQSTLE…VAKLVTQEMF (215 aa)). Active-site for protease 3C activity residues include H1563, D1603, and C1691. The 122-residue stretch at 1976–2097 (DVGLDLDFSA…VFSRDVQIDN (122 aa)) folds into the RdRp catalytic domain.

The protein belongs to the picornaviridae polyprotein family. As to quaternary structure, homodimer. Homomultimer; probably interacts with membranes in a multimeric form. Seems to assemble into amyloid-like fibers. In terms of assembly, homodimer. Monomer. Interacts with protein 3CD. Interacts with host ACBD3. As to quaternary structure, interacts with protein 3AB. In terms of assembly, interacts with human MAVS. Homodimer; disulfide-linked. As to quaternary structure, homopentamer. Homooligomer. In terms of assembly, interacts with capsid protein VP2. Interacts with capsid protein VP3. Interacts with capsid protein VP1. Interacts with capsid protein VP3. As to quaternary structure, interacts with capsid protein VP1. Interacts with capsid protein VP2. Specific enzymatic cleavages by viral protease in vivo yield a variety of precursors and mature proteins. Polyprotein processing intermediates are produced, such as P1-2A which is a functional precursor of the structural proteins, VP0 which is a VP4-VP2 precursor, VP1-2A precursor, 3ABC precursor which is a stable and catalytically active precursor of 3A, 3B and 3C proteins, 3AB and 3CD precursors. The assembly signal 2A is removed from VP1-2A by a host protease, possibly host Cathepsin L. This cleavage occurs over a region of 3 amino-acids probably generating VP1 proteins with heterogeneous C-termini. In terms of processing, during virion maturation, immature virions are rendered infectious following cleavage of VP0 into VP4 and VP2. This maturation seems to be an autocatalytic event triggered by the presence of RNA in the capsid and is followed by a conformational change of the particle. Post-translationally, the assembly signal 2A is removed from VP1-2A by a host protease, possibly host Cathepsin L in naked virions. This cleavage does not occur in enveloped virions. This cleavage occurs over a region of 3 amino-acids probably generating VP1 proteins with heterogeneous C-termini. VPg is uridylylated prior to priming replication into VPg-pUpU. In terms of processing, unlike other picornaviruses, does not seem to be myristoylated.

The protein resides in the virion. Its subcellular location is the host endosome. The protein localises to the host multivesicular body. It is found in the host membrane. It localises to the host mitochondrion outer membrane. The protein resides in the host cytoplasm. Its subcellular location is the host cytoplasmic vesicle membrane. The enzyme catalyses RNA(n) + a ribonucleoside 5'-triphosphate = RNA(n+1) + diphosphate. The catalysed reaction is a ribonucleoside 5'-triphosphate + H2O = a ribonucleoside 5'-diphosphate + phosphate + H(+). It catalyses the reaction Selective cleavage of Gln-|-Gly bond in the poliovirus polyprotein. In other picornavirus reactions Glu may be substituted for Gln, and Ser or Thr for Gly.. Functionally, capsid proteins VP1, VP2, and VP3 form a closed capsid enclosing the viral positive strand RNA genome. All these proteins contain a beta-sheet structure called beta-barrel jelly roll. Together they form an icosahedral capsid (T=3) composed of 60 copies of each VP1, VP2, and VP3, with a diameter of approximately 300 Angstroms. VP1 is situated at the 12 fivefold axes, whereas VP2 and VP3 are located at the quasi-sixfold axes. The naked capsid interacts with the host receptor HAVCR1 to provide virion attachment to and probably entry into the target cell. Its function is as follows. VP0 precursor is a component of the immature procapsids. Plays a role in the assembly of the 12 pentamers into an icosahedral structure. Has not been detected in mature virions, supposedly owing to its small size. In terms of biological role, precursor component of immature procapsids that corresponds to an extended form of the structural protein VP1. After maturation, possibly by the host Cathepsin L, the assembly signal 2A is cleaved to give rise to the mature VP1 protein. Functionally, functions as a viroporin. Affects membrane integrity and causes an increase in membrane permeability. Involved in host intracellular membrane rearrangements probably to give rise to the viral factories. Does not disrupt calcium homeostasis or glycoprotein trafficking. Antagonizes the innate immune response of the host by suppressing IFN-beta synthesis, which it achieves by interfering with the RIG-I/IFIH1 pathway. Its function is as follows. Affects membrane integrity and causes an increase in membrane permeability. Associates with and induces structural rearrangements of intracellular membranes. Displays RNA-binding activity. In terms of biological role, the precursor 3ABC is targeted to the mitochondrial membrane where protease 3C activity cleaves and inhibits the host antiviral protein MAVS, thereby disrupting activation of IRF3 through the IFIH1/MDA5 pathway. In vivo, the protease activity of 3ABC precursor is more efficient in cleaving the 2BC precursor than that of protein 3C. The 3ABC precursor may therefore play a role in the proteolytic processing of the polyprotein. Possible viroporin. Functionally, interacts with the 3CD precursor and with RNA structures found at both the 5'- and 3'-termini of the viral genome. Since the 3AB precursor contains the hydrophobic domain 3A, it probably anchors the whole viral replicase complex to intracellular membranes on which viral RNA synthesis occurs. Its function is as follows. May serve as membrane anchor to the 3AB and 3ABC precursors via its hydrophobic domain. May interact with RNA. Acts as a primer for viral RNA replication and remains covalently bound to viral genomic RNA. VPg is uridylylated prior to priming replication into VPg-pUpU. The VPg-pUpU is then used as primer on the genomic RNA poly(A) by the RNA-dependent RNA polymerase to replicate the viral genome. In terms of biological role, cysteine protease that generates mature viral proteins from the precursor polyprotein. In addition to its proteolytic activity, it binds to viral RNA, and thus influences viral genome replication. RNA and substrate bind cooperatively to the protease. Cleaves IKBKG/NEMO to impair innate immune signaling. Cleaves host PABPC1 which may participate in the switch of viral translation to RNA synthesis. Functionally, interacts with the 3AB precursor and with RNA structures found at both the 5'- and 3'-termini of the viral genome. Disrupts TLR3 signaling by degrading the host adapter protein TICAM1/TRIF. Its function is as follows. Replicates genomic and antigenomic RNA by recognizing replications specific signals. The sequence is that of Genome polyprotein from Cercopithecus hamlyni (Owl-faced monkey).